Reading from the N-terminus, the 359-residue chain is MAPNGTASSFCLDSTACKITITVVLAVLILITVAGNVVVCLAVGLNRRLRNLTNCFIVSLAITDLLLGLLVLPFSAIYQLSCKWSFGKVFCNIYTSLDVMLCTASILNLFMISLDRYCAVMDPLRYPVLVTPVRVAISLVLIWVISITLSFLSIHLGWNSRNETSKGNHTTSKCKVQVNEVYGLVDGLVTFYLPLLIMCITYYRIFKVARDQAKRINHISSWKAATIREHKATVTLAAVMGAFIICWFPYFTAFVYRGLRGDDAINEVLEAIVLWLGYANSALNPILYAALNRDFRTGYQQLFCCRLANRNSHKTSLRSNASQLSRTQSREPRQQEEKPLKLQVWSGTEVTAPQGATDR.

At 1–22 (MAPNGTASSFCLDSTACKITIT) the chain is on the extracellular side. N-linked (GlcNAc...) asparagine glycosylation is present at asparagine 4. The chain crosses the membrane as a helical span at residues 23 to 44 (VVLAVLILITVAGNVVVCLAVG). The Cytoplasmic segment spans residues 45–57 (LNRRLRNLTNCFI). The helical transmembrane segment at 58–81 (VSLAITDLLLGLLVLPFSAIYQLS) threads the bilayer. Over 82-92 (CKWSFGKVFCN) the chain is Extracellular. Cysteine 91 and cysteine 174 form a disulfide bridge. A helical transmembrane segment spans residues 93–114 (IYTSLDVMLCTASILNLFMISL). The Cytoplasmic segment spans residues 115-134 (DRYCAVMDPLRYPVLVTPVR). Residues 135–159 (VAISLVLIWVISITLSFLSIHLGWN) traverse the membrane as a helical segment. Over 160-180 (SRNETSKGNHTTSKCKVQVNE) the chain is Extracellular. The helical transmembrane segment at 181–204 (VYGLVDGLVTFYLPLLIMCITYYR) threads the bilayer. The Cytoplasmic portion of the chain corresponds to 205 to 234 (IFKVARDQAKRINHISSWKAATIREHKATV). The chain crosses the membrane as a helical span at residues 235-258 (TLAAVMGAFIICWFPYFTAFVYRG). The Extracellular portion of the chain corresponds to 259–267 (LRGDDAINE). The helical transmembrane segment at 268–289 (VLEAIVLWLGYANSALNPILYA) threads the bilayer. Residues 290-359 (ALNRDFRTGY…VTAPQGATDR (70 aa)) lie on the Cytoplasmic side of the membrane. The S-palmitoyl cysteine moiety is linked to residue cysteine 305. The interval 316-340 (SLRSNASQLSRTQSREPRQQEEKPL) is disordered. Residues 317–327 (LRSNASQLSRT) show a composition bias toward polar residues. Residues 328–340 (QSREPRQQEEKPL) are compositionally biased toward basic and acidic residues.

Belongs to the G-protein coupled receptor 1 family.

Its subcellular location is the cell membrane. The H2 subclass of histamine receptors mediates gastric acid secretion. Also appears to regulate gastrointestinal motility and intestinal secretion. Possible role in regulating cell growth and differentiation. The activity of this receptor is mediated by G proteins which activate adenylyl cyclase and, through a separate G protein-dependent mechanism, the phosphoinositide/protein kinase (PKC) signaling pathway. The sequence is that of Histamine H2 receptor (HRH2) from Gorilla gorilla gorilla (Western lowland gorilla).